Consider the following 381-residue polypeptide: Anhydro-N-acetylmuramic acid kinase (381 aa).

Position 13–20 (13–20) interacts with ATP; the sequence is GTSLDGID.

It belongs to the anhydro-N-acetylmuramic acid kinase family.

The catalysed reaction is 1,6-anhydro-N-acetyl-beta-muramate + ATP + H2O = N-acetyl-D-muramate 6-phosphate + ADP + H(+). The protein operates within amino-sugar metabolism; 1,6-anhydro-N-acetylmuramate degradation. It functions in the pathway cell wall biogenesis; peptidoglycan recycling. Functionally, catalyzes the specific phosphorylation of 1,6-anhydro-N-acetylmuramic acid (anhMurNAc) with the simultaneous cleavage of the 1,6-anhydro ring, generating MurNAc-6-P. Is required for the utilization of anhMurNAc either imported from the medium or derived from its own cell wall murein, and thus plays a role in cell wall recycling. This chain is Anhydro-N-acetylmuramic acid kinase, found in Francisella tularensis subsp. novicida (strain U112).